Here is a 227-residue protein sequence, read N- to C-terminus: 7-cyano-7-deazaguanine synthase (227 aa).

ATP is bound at residue 7–17 (LSGGMDSLVTT). Residues cysteine 187, cysteine 195, cysteine 198, and cysteine 201 each contribute to the Zn(2+) site.

It belongs to the QueC family. The cofactor is Zn(2+).

It carries out the reaction 7-carboxy-7-deazaguanine + NH4(+) + ATP = 7-cyano-7-deazaguanine + ADP + phosphate + H2O + H(+). It participates in purine metabolism; 7-cyano-7-deazaguanine biosynthesis. Its function is as follows. Catalyzes the ATP-dependent conversion of 7-carboxy-7-deazaguanine (CDG) to 7-cyano-7-deazaguanine (preQ(0)). This Chlorobium phaeovibrioides (strain DSM 265 / 1930) (Prosthecochloris vibrioformis (strain DSM 265)) protein is 7-cyano-7-deazaguanine synthase.